Reading from the N-terminus, the 227-residue chain is PKHD-type hydroxylase azo0608 (227 aa).

Residues 78–178 form the Fe2OG dioxygenase domain; that stretch reads RVLTPFFNRY…RVACFMFMQS (101 aa). H97, D99, and H159 together coordinate Fe cation. R169 contacts 2-oxoglutarate.

The cofactor is Fe(2+). L-ascorbate is required as a cofactor.

The sequence is that of PKHD-type hydroxylase azo0608 from Azoarcus sp. (strain BH72).